A 373-amino-acid chain; its full sequence is NK1 transcription factor-related protein 1 (373 aa).

Disordered stretches follow at residues 49-74, 149-231, and 281-328; these read ALPA…TVHR, SDFT…RRAR, and KWKK…SMHT. A compositionally biased stretch (basic and acidic residues) spans 53–63; the sequence is ESRETSPRHEP. Over residues 168 to 177 the composition is skewed to polar residues; it reads EESSALTGNN. A compositionally biased stretch (low complexity) spans 196-210; that stretch reads GQQTQQSSSNGQNHQ. The homeobox DNA-binding region spans 227–286; that stretch reads PRRARTAFTYEQLVALENKFKSTRYLSVCERLNLALSLSLTETQVKIWFQNRRTKWKKQN. Residues 296 to 310 are compositionally biased toward gly residues; the sequence is SGGGGGNGPSNGLGG.

Belongs to the NK-1 homeobox family.

It is found in the nucleus. May participate in the energy homeostasis regulation. This Danio rerio (Zebrafish) protein is NK1 transcription factor-related protein 1.